Consider the following 318-residue polypeptide: Methionyl-tRNA formyltransferase (318 aa).

Position 112–115 (112–115) interacts with (6S)-5,6,7,8-tetrahydrofolate; the sequence is SILP.

Belongs to the Fmt family.

The enzyme catalyses L-methionyl-tRNA(fMet) + (6R)-10-formyltetrahydrofolate = N-formyl-L-methionyl-tRNA(fMet) + (6S)-5,6,7,8-tetrahydrofolate + H(+). Attaches a formyl group to the free amino group of methionyl-tRNA(fMet). The formyl group appears to play a dual role in the initiator identity of N-formylmethionyl-tRNA by promoting its recognition by IF2 and preventing the misappropriation of this tRNA by the elongation apparatus. This Shewanella sp. (strain W3-18-1) protein is Methionyl-tRNA formyltransferase.